Here is a 668-residue protein sequence, read N- to C-terminus: Phosphoglycerate transport system sensor protein PgtB (668 aa).

2 helical membrane-spanning segments follow: residues Gly-20–Trp-40 and Leu-342–Ile-362. Positions Ser-364–Arg-416 constitute an HAMP domain. The Histidine kinase domain occupies Thr-454–Asp-663. A Phosphohistidine; by autocatalysis modification is found at His-457.

It localises to the cell inner membrane. It carries out the reaction ATP + protein L-histidine = ADP + protein N-phospho-L-histidine.. Functionally, member of the two-component regulatory system PgtB/PgtA that regulates the inducible phosphoglycerate transport system. Activates PgtA by phosphorylation. The sequence is that of Phosphoglycerate transport system sensor protein PgtB (pgtB) from Salmonella typhimurium (strain LT2 / SGSC1412 / ATCC 700720).